The following is a 239-amino-acid chain: Transcriptional regulatory protein DcuR (239 aa).

The 119-residue stretch at 3-121 (NVLIIDDDAM…RFEEALTGWR (119 aa)) folds into the Response regulatory domain. Asp56 is subject to 4-aspartylphosphate. Residues 181–200 (TDELANEVNISRVSCRKYLI) constitute a DNA-binding region (H-T-H motif).

In terms of processing, phosphorylated and activated by DcuS.

The protein resides in the cytoplasm. Member of the two-component regulatory system DcuR/DcuS. Involved in the C4-dicarboxylate-stimulated regulation of the genes encoding the anaerobic fumarate respiratory system (frdABCD; nuoAN; dcuB; dcuC; sdhCDAB; etc.). Weakly regulates the aerobic C4-dicarboxylate transporter dctA. This Escherichia coli O157:H7 protein is Transcriptional regulatory protein DcuR (dcuR).